A 398-amino-acid chain; its full sequence is S-adenosylmethionine synthase (398 aa).

H15 serves as a coordination point for ATP. Residue D17 participates in Mg(2+) binding. Residue E43 coordinates K(+). L-methionine is bound by residues E56 and Q99. Residues 99–109 (QSPDIAQGVDT) form a flexible loop region. Residues 175–177 (DGK), 243–244 (RF), D252, 258–259 (RK), A275, and K279 contribute to the ATP site. Residue D252 participates in L-methionine binding. Position 283 (K283) interacts with L-methionine.

This sequence belongs to the AdoMet synthase family. Homotetramer; dimer of dimers. The cofactor is Mg(2+). It depends on K(+) as a cofactor.

It is found in the cytoplasm. It catalyses the reaction L-methionine + ATP + H2O = S-adenosyl-L-methionine + phosphate + diphosphate. It participates in amino-acid biosynthesis; S-adenosyl-L-methionine biosynthesis; S-adenosyl-L-methionine from L-methionine: step 1/1. Catalyzes the formation of S-adenosylmethionine (AdoMet) from methionine and ATP. The overall synthetic reaction is composed of two sequential steps, AdoMet formation and the subsequent tripolyphosphate hydrolysis which occurs prior to release of AdoMet from the enzyme. This Parafrankia sp. (strain EAN1pec) protein is S-adenosylmethionine synthase.